The chain runs to 302 residues: Acetylglutamate kinase (302 aa).

Residues 55 to 56 (GG), arginine 77, and asparagine 176 each bind substrate.

Belongs to the acetylglutamate kinase family. ArgB subfamily.

The protein resides in the cytoplasm. The enzyme catalyses N-acetyl-L-glutamate + ATP = N-acetyl-L-glutamyl 5-phosphate + ADP. It participates in amino-acid biosynthesis; L-arginine biosynthesis; N(2)-acetyl-L-ornithine from L-glutamate: step 2/4. Functionally, catalyzes the ATP-dependent phosphorylation of N-acetyl-L-glutamate. The polypeptide is Acetylglutamate kinase (Corynebacterium efficiens (strain DSM 44549 / YS-314 / AJ 12310 / JCM 11189 / NBRC 100395)).